A 292-amino-acid chain; its full sequence is Xanthine dehydrogenase FAD-binding subunit (292 aa).

The FAD-binding PCMH-type domain occupies Met-1–Lys-176. FAD-binding positions include Lys-27–Asp-34, Ala-109–Gly-113, Ile-165, and Phe-184.

As to quaternary structure, heterotrimer of XdhA, XdhB and XdhC. FAD serves as cofactor.

The catalysed reaction is xanthine + NAD(+) + H2O = urate + NADH + H(+). The enzyme catalyses hypoxanthine + NAD(+) + H2O = xanthine + NADH + H(+). Its pathway is purine metabolism; hypoxanthine degradation; urate from hypoxanthine: step 1/2. It participates in purine metabolism; hypoxanthine degradation; urate from hypoxanthine: step 2/2. Functionally, presumed to be a dehydrogenase, but possibly an oxidase. Participates in limited purine salvage (requires aspartate) but does not support aerobic growth on purines as the sole carbon source (purine catabolism). This chain is Xanthine dehydrogenase FAD-binding subunit (xdhB), found in Escherichia coli O157:H7.